The sequence spans 1050 residues: Elongation factor 3 (1050 aa).

V43 and H45 together coordinate ADP. Residues 46–83 (DVPVEFFEDLKKQIQSKDAKVSLAALDAYKHIASTNGL) form an HEAT 1 repeat. Residue S86 participates in ADP binding. 6 HEAT repeats span residues 89–126 (PYVV…AITP), 127–165 (TAVK…TAKA), 169–206 (LRMP…TIDN), 208–244 (DIEK…EVTM), 245–282 (ATLS…LVED), and 288–326 (PFMD…VGAV). Positions 395, 399, and 400 each coordinate ADP. 2 ABC transporter domains span residues 429–646 (DEGE…YYEL) and 672–998 (VKVS…KKDD). Positions 708, 927, 930, and 956 each coordinate ADP. The disordered stretch occupies residues 980 to 1050 (GHNWVQGQGS…DAYVSSDEEF (71 aa)). Residues 1013 to 1037 (AAKKKKKLSSAELRKKKKERMKKKK) are compositionally biased toward basic residues.

It belongs to the ABC transporter superfamily. ABCF family. EF3 subfamily. In terms of assembly, monomer.

It is found in the cytoplasm. It carries out the reaction ATP + H2O = ADP + phosphate + H(+). It functions in the pathway protein biosynthesis; polypeptide chain elongation. In terms of biological role, ribosome-dependent ATPase that functions in cytoplasmic translation elongation. Required for the ATP-dependent release of deacylated tRNA from the ribosomal E-site during protein biosynthesis. Stimulates the eEF1A-dependent binding of aminoacyl-tRNA to the ribosomal A-site, which has reduced affinity for tRNA as long as the E-site is occupied. Assists translation termination by stimulating the release of nascent protein from the ribosome by release factors. This Candida albicans (strain SC5314 / ATCC MYA-2876) (Yeast) protein is Elongation factor 3 (CEF3).